The chain runs to 441 residues: Endothelin receptor type B (441 aa).

The first 26 residues, 1–26 (MQPLPSLCGRALVALILACGVAGIQA), serve as a signal peptide directing secretion. Residues 27–100 (EEREFPPAGA…GPIEIKETFK (74 aa)) are Extracellular-facing. Residues 30-87 (EFPPAGATQPLPGTGEMMETPTETSWPGRSNASDPRSSATPQIPRGGRMAGIPPRTPP) form a disordered region. Over residues 41-53 (PGTGEMMETPTET) the composition is skewed to low complexity. Positions 54-70 (SWPGRSNASDPRSSATP) are enriched in polar residues. Residues 101–125 (YINTVVSCLVFVLGIIGNSTLLRII) form a helical membrane-spanning segment. Residues 126–136 (YKNKCMRNGPN) lie on the Cytoplasmic side of the membrane. A helical membrane pass occupies residues 137-162 (ILIASLALGDLLHIIIDIPINTYKLL). Over 163–174 (AKDWPFGVEMCK) the chain is Extracellular. An intrachain disulfide couples Cys-173 to Cys-254. Residues 175–196 (LVPFIQKASVGITVLSLCALSI) traverse the membrane as a helical segment. Topologically, residues 197 to 217 (DRYRAVASWSRIKGIGVPKWT) are cytoplasmic. The helical transmembrane segment at 218 to 242 (AVEIVLIWVVSVVLAVPEAVGFDII) threads the bilayer. The Extracellular portion of the chain corresponds to 243 to 270 (TSDHIGNKLRICLLHPTQKTAFMQFYKT). Residues 271-295 (AKDWWLFSFYFCLPLAITALFYTLM) traverse the membrane as a helical segment. Residues 296 to 323 (TCEMLRKKSGMQIALNDHLKQRREVAKT) are Cytoplasmic-facing. A Phosphoserine modification is found at Ser-304. The helical transmembrane segment at 324-349 (VFCLVLVFALCWLPLHLSRILKLTLY) threads the bilayer. Over 350 to 361 (DQHDPRRCEFLS) the chain is Extracellular. A helical membrane pass occupies residues 362–388 (FLLVLDYIGINMASLNSCINPIALYLV). At 389–441 (SKRFKNCFKSCLCCWCQSFEEKQSLEEKQSCLKFKANDHGYDNFRSSNKYSSS) the chain is on the cytoplasmic side. Residues Cys-402 and Cys-404 are each lipidated (S-palmitoyl cysteine). Phosphoserine is present on residues Ser-418, Ser-434, and Ser-435. Tyr-438 carries the post-translational modification Phosphotyrosine. Phosphoserine is present on residues Ser-439, Ser-440, and Ser-441.

It belongs to the G-protein coupled receptor 1 family. Endothelin receptor subfamily. EDNRB sub-subfamily. In terms of processing, it is not sure whether phosphorylation is on Ser-434 or Ser-435.

It is found in the cell membrane. In terms of biological role, non-specific receptor for endothelin 1, 2, and 3. Mediates its action by association with G proteins that activate a phosphatidylinositol-calcium second messenger system. This Bos taurus (Bovine) protein is Endothelin receptor type B (EDNRB).